Consider the following 143-residue polypeptide: MGKPKGLCTARKLKTHRQEQRWNDKRYKKAHIGTRWKSNPFGGASHAKGIVLEKIGVEAKQPNSAIRKCVRVQLIKNGKKITAFVPNDGCLNFVEENDEVLVSGFGRSGHAVGDIPGVRFKIVKVANTSLIALFKGKKERPRS.

Residue P62 is modified to Hydroxyproline.

This sequence belongs to the universal ribosomal protein uS12 family. As to quaternary structure, component of the 40S small ribosomal subunit.

It localises to the cytoplasm. It is found in the cytosol. The protein localises to the rough endoplasmic reticulum. In Caenorhabditis elegans, this protein is Small ribosomal subunit protein uS12 (rps-23).